The following is a 321-amino-acid chain: Olfactory receptor 3A2 (321 aa).

Over 1–35 (MSLQKLMEPEAGTNRTAVAEFILLGLVQTEEMQPV) the chain is Extracellular. N-linked (GlcNAc...) asparagine glycosylation occurs at N14. The chain crosses the membrane as a helical span at residues 36–58 (VFVLLLFAYLVTTGGNLSILAAV). Topologically, residues 59 to 66 (LVEPKLHA) are cytoplasmic. A helical membrane pass occupies residues 67-88 (PMYFFLGNLSVLDVGCITVTVP). Over 89–109 (AMLGRLLSHKSTISYDACLSQ) the chain is Extracellular. A disulfide bridge connects residues C106 and C198. The helical transmembrane segment at 110–129 (LFFFHLLAGMDCFLLTAMAY) threads the bilayer. At 130–149 (DRLLAICQPLTYSTRMSQTV) the chain is on the cytoplasmic side. A helical transmembrane segment spans residues 150 to 167 (QRMLVAASLACAFTNALT). Topologically, residues 168 to 205 (HTVAMSTLNFCGPNEVNHFYCDLPQLFQLSCSSTQLNE) are extracellular. A helical transmembrane segment spans residues 206-229 (LLLFAVGFIMAGTPLVLIITAYSH). Residues 230–246 (VAAAVLRIRSVEGRKKA) lie on the Cytoplasmic side of the membrane. A helical membrane pass occupies residues 247-270 (FSTCGSHLTVVCLFFGRGIFNYMR). At 271–281 (LGSEEASDKDK) the chain is on the extracellular side. A helical transmembrane segment spans residues 282–301 (GVGVFNTVINPMLNPLIYSL). The Cytoplasmic portion of the chain corresponds to 302-321 (RNPDVQGALWQIFLGRRSLT).

It belongs to the G-protein coupled receptor 1 family.

The protein resides in the cell membrane. Functionally, odorant receptor. This is Olfactory receptor 3A2 (OR3A2) from Homo sapiens (Human).